The sequence spans 374 residues: Queuine tRNA-ribosyltransferase (374 aa).

Asp-89 serves as the catalytic Proton acceptor. Residues 89 to 93, Asp-143, Gln-187, and Gly-214 contribute to the substrate site; that span reads DSGGF. The RNA binding stretch occupies residues 245–251; sequence GVGKPED. The Nucleophile role is filled by Asp-264. The RNA binding; important for wobble base 34 recognition stretch occupies residues 269-273; the sequence is TRNAR. Positions 302, 304, 307, and 333 each coordinate Zn(2+).

This sequence belongs to the queuine tRNA-ribosyltransferase family. In terms of assembly, homodimer. Within each dimer, one monomer is responsible for RNA recognition and catalysis, while the other monomer binds to the replacement base PreQ1. Zn(2+) is required as a cofactor.

The catalysed reaction is 7-aminomethyl-7-carbaguanine + guanosine(34) in tRNA = 7-aminomethyl-7-carbaguanosine(34) in tRNA + guanine. It participates in tRNA modification; tRNA-queuosine biosynthesis. Functionally, catalyzes the base-exchange of a guanine (G) residue with the queuine precursor 7-aminomethyl-7-deazaguanine (PreQ1) at position 34 (anticodon wobble position) in tRNAs with GU(N) anticodons (tRNA-Asp, -Asn, -His and -Tyr). Catalysis occurs through a double-displacement mechanism. The nucleophile active site attacks the C1' of nucleotide 34 to detach the guanine base from the RNA, forming a covalent enzyme-RNA intermediate. The proton acceptor active site deprotonates the incoming PreQ1, allowing a nucleophilic attack on the C1' of the ribose to form the product. After dissociation, two additional enzymatic reactions on the tRNA convert PreQ1 to queuine (Q), resulting in the hypermodified nucleoside queuosine (7-(((4,5-cis-dihydroxy-2-cyclopenten-1-yl)amino)methyl)-7-deazaguanosine). The protein is Queuine tRNA-ribosyltransferase of Yersinia pseudotuberculosis serotype O:1b (strain IP 31758).